We begin with the raw amino-acid sequence, 509 residues long: tRNA (guanine(37)-N(1))-methyltransferase (509 aa).

S-adenosyl-L-methionine contacts are provided by residues histidine 289, aspartate 327 to leucine 328, aspartate 355 to glycine 356, and asparagine 387. The segment at threonine 478–threonine 509 is disordered.

The protein belongs to the class I-like SAM-binding methyltransferase superfamily. TRM5/TYW2 family. As to quaternary structure, monomer.

It localises to the mitochondrion matrix. The protein localises to the nucleus. Its subcellular location is the cytoplasm. It catalyses the reaction guanosine(37) in tRNA + S-adenosyl-L-methionine = N(1)-methylguanosine(37) in tRNA + S-adenosyl-L-homocysteine + H(+). Its function is as follows. Involved in mitochondrial tRNA methylation. Specifically methylates the N1 position of guanosine-37 in various tRNAs. Methylation is not dependent on the nature of the nucleoside 5' of the target nucleoside. This is the first step in the biosynthesis of wybutosine (yW), a modified base adjacent to the anticodon of tRNAs and required for accurate decoding. This is tRNA (guanine(37)-N(1))-methyltransferase from Homo sapiens (Human).